Here is a 196-residue protein sequence, read N- to C-terminus: Chromophore lyase CpcT/CpeT (196 aa).

This sequence belongs to the CpcT/CpeT biliprotein lyase family.

Functionally, covalently attaches a chromophore to Cys residue(s) of phycobiliproteins. The protein is Chromophore lyase CpcT/CpeT of Synechocystis sp. (strain ATCC 27184 / PCC 6803 / Kazusa).